Consider the following 282-residue polypeptide: Pantothenate synthetase (282 aa).

30-37 (MGYLHEGH) is an ATP binding site. Residue H37 is the Proton donor of the active site. Q61 contributes to the (R)-pantoate binding site. Q61 is a beta-alanine binding site. 147-150 (GMKD) contacts ATP. Position 153 (Q153) interacts with (R)-pantoate. ATP contacts are provided by residues V176 and 184–187 (KSSR).

This sequence belongs to the pantothenate synthetase family. As to quaternary structure, homodimer.

It is found in the cytoplasm. The enzyme catalyses (R)-pantoate + beta-alanine + ATP = (R)-pantothenate + AMP + diphosphate + H(+). It participates in cofactor biosynthesis; (R)-pantothenate biosynthesis; (R)-pantothenate from (R)-pantoate and beta-alanine: step 1/1. Its function is as follows. Catalyzes the condensation of pantoate with beta-alanine in an ATP-dependent reaction via a pantoyl-adenylate intermediate. This is Pantothenate synthetase from Bacillus anthracis (strain A0248).